The primary structure comprises 173 residues: Large ribosomal subunit protein uL10 (173 aa).

Belongs to the universal ribosomal protein uL10 family. As to quaternary structure, part of the ribosomal stalk of the 50S ribosomal subunit. The N-terminus interacts with L11 and the large rRNA to form the base of the stalk. The C-terminus forms an elongated spine to which L12 dimers bind in a sequential fashion forming a multimeric L10(L12)X complex.

In terms of biological role, forms part of the ribosomal stalk, playing a central role in the interaction of the ribosome with GTP-bound translation factors. The chain is Large ribosomal subunit protein uL10 from Christiangramia forsetii (strain DSM 17595 / CGMCC 1.15422 / KT0803) (Gramella forsetii).